The following is a 193-amino-acid chain: Probable GTP-binding protein EngB (193 aa).

The region spanning 20 to 193 (GVPEVAFAGR…ELAHEISRCI (174 aa)) is the EngB-type G domain. Residues 28–35 (GRSNVGKS), 55–59 (GSTRQ), 73–76 (DLPG), 140–143 (TKAD), and 171–176 (IMWVSS) contribute to the GTP site. Mg(2+)-binding residues include serine 35 and threonine 57.

Belongs to the TRAFAC class TrmE-Era-EngA-EngB-Septin-like GTPase superfamily. EngB GTPase family. Requires Mg(2+) as cofactor.

Its function is as follows. Necessary for normal cell division and for the maintenance of normal septation. This is Probable GTP-binding protein EngB from Anaplasma phagocytophilum (strain HZ).